We begin with the raw amino-acid sequence, 123 residues long: Loki profilin-3 (123 aa).

Belongs to the Asgard profilin family.

It is found in the cytoplasm. The protein localises to the cytoskeleton. Binds to actin and affects the structure of the cytoskeleton. At high concentrations inhibits spontaneous rabbit actin nucleation. This strongly suggests this archaea has a profilin-regulated actin system, and actin-type genes can be identified in this organism. The chain is Loki profilin-3 from Lokiarchaeum sp. (strain GC14_75).